The following is a 416-amino-acid chain: Choline/ethanolaminephosphotransferase 1 (416 aa).

The disordered stretch occupies residues 1 to 20 (MSGHRSTRKRCGDSHPESPV). Ser-18 carries the post-translational modification Phosphoserine. Thr-40 is subject to Phosphothreonine. Asn-86 is a binding site for CDP-choline. 2 helical membrane passes run 89-108 (TIIG…FYCP) and 116-133 (LWAY…QSLD). Position 133 (Asp-133) interacts with Mg(2+). The N-linked (GlcNAc...) asparagine glycan is linked to Asn-144. Glu-151 contacts CDP-choline. Residue Asp-154 coordinates Mg(2+). The active-site Proton acceptor is the His-155. The next 8 membrane-spanning stretches (helical) occupy residues 156–176 (GCDS…VQLG), 180–199 (DWMF…AHWQ), 210–230 (IIDV…AVIG), 246–267 (MKLL…NYFR), 286–306 (VLSP…IYKK), 315–334 (HPCL…TNKL), 349–363 (TAFI…DQYF), and 368–388 (DEYI…IRYC). Asp-158 contributes to the Mg(2+) binding site.

It belongs to the CDP-alcohol phosphatidyltransferase class-I family. In terms of assembly, homodimer. Mg(2+) serves as cofactor. It depends on Mn(2+) as a cofactor.

It is found in the endoplasmic reticulum membrane. Its subcellular location is the nucleus membrane. It catalyses the reaction CDP-ethanolamine + a 1,2-diacyl-sn-glycerol = a 1,2-diacyl-sn-glycero-3-phosphoethanolamine + CMP + H(+). The enzyme catalyses CDP-choline + a 1,2-diacyl-sn-glycerol = a 1,2-diacyl-sn-glycero-3-phosphocholine + CMP + H(+). The catalysed reaction is 1-O-alkyl-2-acyl-sn-glycerol + CDP-choline = a 1-O-alkyl-2-acyl-sn-glycero-3-phosphocholine + CMP + H(+). It carries out the reaction a 1-O-(1Z-alkenyl)-2-acyl-sn-glycerol + CDP-choline = a 1-O-(1Z-alkenyl)-2-acyl-sn-glycero-3-phosphocholine + CMP + H(+). It catalyses the reaction 1,2-dioctanoyl-sn-glycerol + CDP-choline = 1,2-dioctanoyl-sn-glycero-3-phosphocholine + CMP + H(+). The enzyme catalyses 1,2-didecanoyl-sn-glycerol + CDP-choline = 1,2-didecanoyl-sn-glycero-3-phosphocholine + CMP + H(+). The catalysed reaction is CDP-choline + 1,2-di-(9Z-octadecenoyl)-sn-glycerol = 1,2-di-(9Z-octadecenoyl)-sn-glycero-3-phosphocholine + CMP + H(+). It carries out the reaction 1-hexadecanoyl-2-(9Z-octadecenoyl)-sn-glycerol + CDP-choline = 1-hexadecanoyl-2-(9Z-octadecenoyl)-sn-glycero-3-phosphocholine + CMP + H(+). It catalyses the reaction CDP-ethanolamine + 1,2-di-(9Z-octadecenoyl)-sn-glycerol = 1,2-di-(9Z-octadecenoyl)-sn-glycero-3-phosphoethanolamine + CMP + H(+). The enzyme catalyses 1-hexadecanoyl-2-(9Z-octadecenoyl)-sn-glycerol + CDP-ethanolamine = 1-hexadecanoyl-2-(9Z-octadecenoyl)-sn-glycero-3-phosphoethanolamine + CMP + H(+). The catalysed reaction is 1-hexadecanoyl-2-(4Z,7Z,10Z,13Z,16Z,19Z-docosahexaenoyl)-sn-glycerol + CDP-choline = 1-hexadecanoyl-2-(4Z,7Z,10Z,13Z,16Z,19Z-docosahexaenoyl)-sn-glycero-3-phosphocholine + CMP + H(+). It carries out the reaction 1,2-di-(9Z-hexadecenoyl)-sn-glycerol + CDP-choline = 1,2-di-(9Z-hexadecenoyl)-sn-glycero-3-phosphocholine + CMP + H(+). It catalyses the reaction 1,2-di-(9Z-hexadecenoyl)-sn-glycerol + CDP-ethanolamine = 1,2-di-(9Z-hexadecenoyl)-sn-glycero-3-phosphoethanolamine + CMP + H(+). The enzyme catalyses 1-O-hexadecyl-2-acetyl-sn-glycerol + CDP-choline = 1-O-hexadecyl-2-acetyl-sn-glycero-3-phosphocholine + CMP + H(+). The catalysed reaction is 1-O-hexadecyl-2-(5Z,8Z,11Z,14Z-eicosatetraenoyl)-sn-glycerol + CDP-choline = 1-O-hexadecyl-2-(5Z,8Z,11Z,14Z)-eicosatetraenoyl-sn-glycero-3-phosphocholine + CMP + H(+). Its pathway is phospholipid metabolism; phosphatidylethanolamine biosynthesis; phosphatidylethanolamine from ethanolamine: step 3/3. It participates in phospholipid metabolism; phosphatidylcholine biosynthesis; phosphatidylcholine from phosphocholine: step 2/2. In terms of biological role, catalyzes both phosphatidylcholine and phosphatidylethanolamine biosynthesis from CDP-choline and CDP-ethanolamine, respectively. Involved in protein-dependent process of phospholipid transport to distribute phosphatidyl choline to the lumenal surface. Has a higher cholinephosphotransferase activity than ethanolaminephosphotransferase activity. In Mus musculus (Mouse), this protein is Choline/ethanolaminephosphotransferase 1.